The following is a 481-amino-acid chain: Phosphoenolpyruvate phosphatase (481 aa).

The N-terminal stretch at 1–36 (MPIYTSRSCFYLLLFHIILLCSVDKTLCRQTSSFVR) is a signal peptide. Asn109 carries an N-linked (GlcNAc...) asparagine glycan. Positions 168, 195, and 198 each coordinate Fe cation. Residue Asp195 participates in Zn(2+) binding. Residue Asn206 is glycosylated (N-linked (GlcNAc...) asparagine). Zn(2+) contacts are provided by Asn232 and His317. Asn232 serves as a coordination point for substrate. His327 acts as the Proton donor in catalysis. His354 contacts Zn(2+). Residue 354 to 356 (HVH) participates in substrate binding. Position 356 (His356) interacts with Fe cation. Residues Asn370 and Asn427 are each glycosylated (N-linked (GlcNAc...) asparagine).

This sequence belongs to the metallophosphoesterase superfamily. Purple acid phosphatase family.

The protein resides in the vacuole lumen. It catalyses the reaction phosphoenolpyruvate + H2O = pyruvate + phosphate. In terms of biological role, phosphoenolpyruvate phosphatase that probably operates in the vacuole to release phosphate from phosphoenolpyruvate (PEP) under phosphorus starvation. This is Phosphoenolpyruvate phosphatase (ACPEPP) from Allium cepa (Onion).